A 56-amino-acid chain; its full sequence is Conotoxin Cal6.41a (56 aa).

Positions 1 to 23 (MSGSGAMLLGLLILVAMATSLDT) are cleaved as a signal peptide. Disulfide bonds link cysteine 27–cysteine 41, cysteine 33–cysteine 50, and cysteine 40–cysteine 54.

Expressed by the venom duct.

It localises to the secreted. Probable neurotoxin. This chain is Conotoxin Cal6.41a, found in Californiconus californicus (California cone).